A 206-amino-acid polypeptide reads, in one-letter code: N-(5'-phosphoribosyl)anthranilate isomerase (206 aa).

The protein belongs to the TrpF family.

It carries out the reaction N-(5-phospho-beta-D-ribosyl)anthranilate = 1-(2-carboxyphenylamino)-1-deoxy-D-ribulose 5-phosphate. It participates in amino-acid biosynthesis; L-tryptophan biosynthesis; L-tryptophan from chorismate: step 3/5. This is N-(5'-phosphoribosyl)anthranilate isomerase from Azotobacter vinelandii (strain DJ / ATCC BAA-1303).